The primary structure comprises 443 residues: Phosphoglucosamine mutase (443 aa).

The active-site Phosphoserine intermediate is S102. 4 residues coordinate Mg(2+): S102, D241, D243, and D245. S102 is subject to Phosphoserine.

This sequence belongs to the phosphohexose mutase family. Mg(2+) serves as cofactor. Post-translationally, activated by phosphorylation.

The catalysed reaction is alpha-D-glucosamine 1-phosphate = D-glucosamine 6-phosphate. Its function is as follows. Catalyzes the conversion of glucosamine-6-phosphate to glucosamine-1-phosphate. The polypeptide is Phosphoglucosamine mutase (Polaromonas sp. (strain JS666 / ATCC BAA-500)).